Reading from the N-terminus, the 470-residue chain is Uronate isomerase (470 aa).

This sequence belongs to the metallo-dependent hydrolases superfamily. Uronate isomerase family.

The catalysed reaction is D-glucuronate = D-fructuronate. It carries out the reaction aldehydo-D-galacturonate = keto-D-tagaturonate. Its pathway is carbohydrate metabolism; pentose and glucuronate interconversion. In Vibrio vulnificus (strain CMCP6), this protein is Uronate isomerase.